Here is a 234-residue protein sequence, read N- to C-terminus: Redox-sensing transcriptional repressor Rex (234 aa).

A DNA-binding region (H-T-H motif) is located at residues 17–56; that stretch reads TYIRVLEELEAQNVLRASSGELARRAGVTPFQVRKDLTYF. 91 to 96 is an NAD(+) binding site; sequence GMGRLG.

It belongs to the transcriptional regulatory Rex family. As to quaternary structure, homodimer.

It localises to the cytoplasm. Functionally, modulates transcription in response to changes in cellular NADH/NAD(+) redox state. This is Redox-sensing transcriptional repressor Rex from Deinococcus radiodurans (strain ATCC 13939 / DSM 20539 / JCM 16871 / CCUG 27074 / LMG 4051 / NBRC 15346 / NCIMB 9279 / VKM B-1422 / R1).